A 31-amino-acid polypeptide reads, in one-letter code: Cytochrome b6-f complex subunit 6 (31 aa).

A helical transmembrane segment spans residues 3 to 23 (ILISYFCFLLVFFLFTLILFI).

The protein belongs to the PetL family. The 4 large subunits of the cytochrome b6-f complex are cytochrome b6, subunit IV (17 kDa polypeptide, PetD), cytochrome f and the Rieske protein, while the 4 small subunits are PetG, PetL, PetM and PetN. The complex functions as a dimer.

Its subcellular location is the plastid. It localises to the chloroplast thylakoid membrane. Functionally, component of the cytochrome b6-f complex, which mediates electron transfer between photosystem II (PSII) and photosystem I (PSI), cyclic electron flow around PSI, and state transitions. PetL is important for photoautotrophic growth as well as for electron transfer efficiency and stability of the cytochrome b6-f complex. This is Cytochrome b6-f complex subunit 6 from Welwitschia mirabilis (Tree tumbo).